The chain runs to 226 residues: Phosphoglycolate phosphatase (226 aa).

The active-site Nucleophile is D5. The Mg(2+) site is built by D5 and D7. K142 lines the substrate pocket. Residues D164 and D168 each coordinate Mg(2+).

This sequence belongs to the archaeal SPP-like hydrolase family. It depends on Mg(2+) as a cofactor.

It carries out the reaction 2-phosphoglycolate + H2O = glycolate + phosphate. In terms of biological role, catalyzes the dephosphorylation of 2-phosphoglycolate. The protein is Phosphoglycolate phosphatase of Sulfurisphaera tokodaii (strain DSM 16993 / JCM 10545 / NBRC 100140 / 7) (Sulfolobus tokodaii).